Reading from the N-terminus, the 803-residue chain is Nucleoporin nup82 (803 aa).

As to quaternary structure, component of the nuclear pore complex (NPC). NPC constitutes the exclusive means of nucleocytoplasmic transport. NPCs allow the passive diffusion of ions and small molecules and the active, nuclear transport receptor-mediated bidirectional transport of macromolecules such as proteins, RNAs, ribonucleoparticles (RNPs), and ribosomal subunits across the nuclear envelope.

It is found in the nucleus. Its subcellular location is the nuclear pore complex. The protein localises to the nucleus membrane. Functionally, functions as a component of the nuclear pore complex (NPC). NPC components, collectively referred to as nucleoporins (NUPs), can play the role of both NPC structural components and of docking or interaction partners for transiently associated nuclear transport factors. The polypeptide is Nucleoporin nup82 (Schizosaccharomyces pombe (strain 972 / ATCC 24843) (Fission yeast)).